The primary structure comprises 88 residues: MLPDHFSPLSGDIKLSVLALVVLVVLAQTAPDGWIRRCYYGTGRCRKSCKEIERKKEKCGEKHICCVPKEKDKLSHIHDQKETSELYI.

A signal peptide spans 1–27 (MLPDHFSPLSGDIKLSVLALVVLVVLA). Intrachain disulfides connect cysteine 38–cysteine 65, cysteine 45–cysteine 59, and cysteine 49–cysteine 66.

The protein belongs to the beta-defensin family.

It is found in the secreted. Its function is as follows. Has antibacterial activity. This is Beta-defensin 115 (DEFB115) from Homo sapiens (Human).